Consider the following 306-residue polypeptide: tRNA pseudouridine synthase B (306 aa).

Catalysis depends on Asp-47, which acts as the Nucleophile.

It belongs to the pseudouridine synthase TruB family. Type 1 subfamily.

It catalyses the reaction uridine(55) in tRNA = pseudouridine(55) in tRNA. In terms of biological role, responsible for synthesis of pseudouridine from uracil-55 in the psi GC loop of transfer RNAs. This chain is tRNA pseudouridine synthase B, found in Neisseria gonorrhoeae (strain ATCC 700825 / FA 1090).